A 158-amino-acid polypeptide reads, in one-letter code: Histone H2B.1 (158 aa).

2 positions are modified to N6-acetyllysine: Lys7 and Lys25. Disordered stretches follow at residues 26-45 and 135-158; these read AAAG…PKKG and VHNF…GQQT. The segment covering 135–144 has biased composition (basic and acidic residues); it reads VHNFESETSK. Basic residues predominate over residues 147–158; the sequence is SQGRKRGRGQQT.

The protein belongs to the histone H2B family. In terms of assembly, the nucleosome is a histone octamer containing two molecules each of H2A, H2B, H3 and H4 assembled in one H3-H4 heterotetramer and two H2A-H2B heterodimers. The octamer wraps approximately 147 bp of DNA. Post-translationally, can be acetylated to form H2BK6ac and H2BK33ac. Expressed in the generative cell within the bicellular pollen. Not detected in other reproductive or vegetative tissues.

The protein localises to the nucleus. Its subcellular location is the chromosome. Core component of nucleosome. Nucleosomes wrap and compact DNA into chromatin, limiting DNA accessibility to the cellular machineries which require DNA as a template. Histones thereby play a central role in transcription regulation, DNA repair, DNA replication and chromosomal stability. DNA accessibility is regulated via a complex set of post-translational modifications of histones, also called histone code, and nucleosome remodeling. The protein is Histone H2B.1 of Lilium longiflorum (Trumpet lily).